An 80-amino-acid chain; its full sequence is Cell division protein ZapB (80 aa).

A coiled-coil region spans residues Leu-3–Glu-80. A disordered region spans residues Leu-41 to Gln-62. Residues Ser-49–Gln-62 show a composition bias toward basic and acidic residues.

It belongs to the ZapB family. Homodimer. The ends of the coiled-coil dimer bind to each other, forming polymers. Interacts with FtsZ.

It localises to the cytoplasm. Functionally, non-essential, abundant cell division factor that is required for proper Z-ring formation. It is recruited early to the divisome by direct interaction with FtsZ, stimulating Z-ring assembly and thereby promoting cell division earlier in the cell cycle. Its recruitment to the Z-ring requires functional FtsA or ZipA. The polypeptide is Cell division protein ZapB (Aliivibrio salmonicida (strain LFI1238) (Vibrio salmonicida (strain LFI1238))).